A 656-amino-acid polypeptide reads, in one-letter code: Translation factor GUF1 homolog, mitochondrial (656 aa).

Positions 55–236 (QRIRNFSIIA…EIVRRLPPPD (182 aa)) constitute a tr-type G domain. Residues 64–71 (AHVDHGKS), 129–133 (DTPGH), and 183–186 (NKID) contribute to the GTP site.

Belongs to the TRAFAC class translation factor GTPase superfamily. Classic translation factor GTPase family. LepA subfamily.

The protein localises to the mitochondrion inner membrane. The enzyme catalyses GTP + H2O = GDP + phosphate + H(+). In terms of biological role, promotes mitochondrial protein synthesis. May act as a fidelity factor of the translation reaction, by catalyzing a one-codon backward translocation of tRNAs on improperly translocated ribosomes. Binds to mitochondrial ribosomes in a GTP-dependent manner. In Aedes aegypti (Yellowfever mosquito), this protein is Translation factor GUF1 homolog, mitochondrial.